Here is a 727-residue protein sequence, read N- to C-terminus: E3 SUMO-protein ligase pli1 (727 aa).

The region spanning 18–52 (ETGLIIPQLKDILRVFGLRLSGTKAELITRIKQLI) is the SAP domain. The region spanning 108-261 (YSRPFAPVVH…SVVVCFVKVY (154 aa)) is the PINIT domain. An SP-RING-type zinc finger spans residues 290–371 (QDADIIATST…MQHILESTPS (82 aa)). Zn(2+) is bound by residues Cys-321, His-323, Cys-344, and Cys-347. 2 positions are modified to phosphoserine: Ser-395 and Ser-396. Disordered stretches follow at residues 408-558 (ELSD…TQHS) and 706-727 (QSNN…QSID). Polar residues-rich tracts occupy residues 417–435 (TMAN…THNS) and 459–494 (VATS…NRST). Residues 546–558 (SQQNNNNSNTQHS) are compositionally biased toward low complexity.

This sequence belongs to the PIAS family. As to quaternary structure, interacts with hus5/ubc9.

Its subcellular location is the nucleus. The protein operates within protein modification; protein sumoylation. Its function is as follows. Acts as an E3 ligase mediating SUMO/Smt3 attachment to other proteins. Involved in the maintenance of the centromere and in telomere length. Regulates recombination, via extension sumoylation, particularly within the heterochromatin repeats. This chain is E3 SUMO-protein ligase pli1 (pli1), found in Schizosaccharomyces pombe (strain 972 / ATCC 24843) (Fission yeast).